The chain runs to 135 residues: MQSSSPSTSHCSQIPIKIQHHIAKKRQVRRRRVDLDCGCSYYIHLDCINHGFTHRGVHHCASSNEWRLYLRDNKSPIFHDNQTQPTTIQQQIQFPNISNQVQPQLEEGTGDSQMFSQLPHLDDLTVSDWSFFKSL.

A Nuclear localization signal motif is present at residues 17 to 32; it reads KIQHHIAKKRQVRRRR. Residues 37 to 54 fold into a zinc finger; that stretch reads CGCSYYIHLDCINHGFTH. Positions 120 to 135 are transactivation; it reads HLDDLTVSDWSFFKSL.

Belongs to the geminiviridae transcriptional activator protein family. As to quaternary structure, monomer. Homodimer. Homooligomer. Self-interaction correlates with nuclear localization and efficient activation of transcription. Monomers suppress local silencing by interacting with and inactivating host adenosine kinase 2 (ADK2) in the cytoplasm. Interacts with and inhibits host SNF1 kinase. Binds to ssDNA. May interact with host RPS27A. Post-translationally, phosphorylated.

The protein localises to the host nucleus. It localises to the host cytoplasm. Multifunctional protein that modulates host antiviral defenses and promotes host attractiveness to insect vectors. Acts as a suppressor of RNA-mediated gene silencing, also known as post-transcriptional gene silencing (PTGS), a mechanism of plant viral defense that limits the accumulation of viral RNAs. TrAP suppresses the host RNA silencing by inhibiting adenosine kinase 2 (ADK2), a kinase involved in a general methylation pathway. Also suppresses the host basal defense by interacting with and inhibiting SNF1 kinase, a key regulator of cell metabolism implicated in innate antiviral defense. Its function is as follows. Inhibits signal transduction by the phytohormone jasmonate, making the infected plant more attractive to aphids, which are the second host to play a role as a dissemination vector. Acts by binding to ubiquitin precursor RPS27A, thereby preventing ubiquitin degradation of JAZ. The chain is Transcriptional activator protein from Tomato yellow leaf curl Sardinia virus (isolate Spain-1) (TYLCSV).